We begin with the raw amino-acid sequence, 861 residues long: Bifunctional uridylyltransferase/uridylyl-removing enzyme (861 aa).

The uridylyltransferase stretch occupies residues methionine 1–arginine 321. Positions leucine 322–threonine 678 are uridylyl-removing. An HD domain is found at valine 440–leucine 562. ACT domains lie at glutamate 679–arginine 760 and glutamine 788–tyrosine 861.

This sequence belongs to the GlnD family. Requires Mg(2+) as cofactor.

It carries out the reaction [protein-PII]-L-tyrosine + UTP = [protein-PII]-uridylyl-L-tyrosine + diphosphate. The catalysed reaction is [protein-PII]-uridylyl-L-tyrosine + H2O = [protein-PII]-L-tyrosine + UMP + H(+). With respect to regulation, uridylyltransferase (UTase) activity is inhibited by glutamine, while glutamine activates uridylyl-removing (UR) activity. In terms of biological role, modifies, by uridylylation and deuridylylation, the PII regulatory proteins (GlnB and homologs), in response to the nitrogen status of the cell that GlnD senses through the glutamine level. Under low glutamine levels, catalyzes the conversion of the PII proteins and UTP to PII-UMP and PPi, while under higher glutamine levels, GlnD hydrolyzes PII-UMP to PII and UMP (deuridylylation). Thus, controls uridylylation state and activity of the PII proteins, and plays an important role in the regulation of nitrogen assimilation and metabolism. This Legionella pneumophila (strain Corby) protein is Bifunctional uridylyltransferase/uridylyl-removing enzyme.